The following is a 446-amino-acid chain: Phosphoglucosamine mutase (446 aa).

Ser99 serves as the catalytic Phosphoserine intermediate. Mg(2+)-binding residues include Ser99, Asp242, Asp244, and Asp246. Position 99 is a phosphoserine (Ser99).

Belongs to the phosphohexose mutase family. Mg(2+) is required as a cofactor. Post-translationally, activated by phosphorylation.

It carries out the reaction alpha-D-glucosamine 1-phosphate = D-glucosamine 6-phosphate. In terms of biological role, catalyzes the conversion of glucosamine-6-phosphate to glucosamine-1-phosphate. In Campylobacter hominis (strain ATCC BAA-381 / DSM 21671 / CCUG 45161 / LMG 19568 / NCTC 13146 / CH001A), this protein is Phosphoglucosamine mutase.